Here is a 299-residue protein sequence, read N- to C-terminus: Sugar transporter SWEET1 (299 aa).

In terms of domain architecture, MtN3/slv 1 spans 7 to 91 (QVLSISAITT…CVFFLIYSLP (85 aa)). 7 helical membrane-spanning segments follow: residues 8–28 (VLSISAITTTIALFFCGIPIC), 36–56 (AVGDISGVPFLMGVLGGSFWL), 67–87 (MIIVNVVGVACMAFYCVFFLI), 95–115 (FTCQLILVTSTIGGMVLWIAL), 124–144 (VICMTFNIMNFGAPLAGLGVV), 155–175 (LPMCVANFLVSSQWCLYGNLV), and 180–200 (IIIPNGIGMFLAIVQLALFVV). In terms of domain architecture, MtN3/slv 2 spans 121-205 (YLGVICMTFN…ALFVVLPIRE (85 aa)). The interval 230 to 299 (RGDCIVSSPP…DPDLSSIQSP (70 aa)) is disordered. The segment covering 247–261 (NETRSDVEDKFDKLM) has biased composition (basic and acidic residues). The segment covering 276–299 (SMGSPPSYKSRSSSDPDLSSIQSP) has biased composition (low complexity).

Belongs to the SWEET sugar transporter family.

It is found in the golgi apparatus membrane. The protein localises to the cell membrane. In terms of biological role, mediates both low-affinity uptake and efflux of sugar across the membrane. The polypeptide is Sugar transporter SWEET1 (swt-1) (Caenorhabditis elegans).